A 117-amino-acid polypeptide reads, in one-letter code: Large ribosomal subunit protein bL20c (117 aa).

Belongs to the bacterial ribosomal protein bL20 family.

It localises to the plastid. The protein resides in the chloroplast. Binds directly to 23S ribosomal RNA and is necessary for the in vitro assembly process of the 50S ribosomal subunit. It is not involved in the protein synthesizing functions of that subunit. The protein is Large ribosomal subunit protein bL20c of Eucalyptus globulus subsp. globulus (Tasmanian blue gum).